The sequence spans 537 residues: NEDD4-binding protein 3 (537 aa).

Residue serine 172 is modified to Phosphoserine. Disordered stretches follow at residues leucine 173 to cysteine 234, lysine 328 to tryptophan 361, and glutamine 423 to alanine 458. A compositionally biased stretch (low complexity) spans proline 178–glycine 207. The stretch at valine 295 to glutamine 501 forms a coiled coil. A compositionally biased stretch (basic and acidic residues) spans proline 351–tryptophan 361.

This sequence belongs to the N4BP3 family. As to quaternary structure, binds NEDD4. Interacts with 14-3-3 proteins. Interacts with MAVS.

It is found in the cytoplasmic vesicle. Its subcellular location is the cell projection. It localises to the axon. The protein localises to the dendrite. Functionally, plays a positive role in the antiviral innate immune signaling pathway. Mechanistically, interacts with MAVS and functions as a positive regulator to promote 'Lys-63'-linked polyubiquitination of MAVS and thus strengthens the interaction between MAVS and TRAF2. Also plays a role in axon and dendrite arborization during cranial nerve development. May also be important for neural crest migration and early development of other anterior structures including eye, brain and cranial cartilage. The polypeptide is NEDD4-binding protein 3 (N4bp3) (Mus musculus (Mouse)).